A 36-amino-acid polypeptide reads, in one-letter code: Photosystem II reaction center protein M (36 aa).

The helical transmembrane segment at 7 to 27 (GFVASLMFVLVPTVFLIVLFI) threads the bilayer.

Belongs to the PsbM family. As to quaternary structure, PSII is composed of 1 copy each of membrane proteins PsbA, PsbB, PsbC, PsbD, PsbE, PsbF, PsbH, PsbI, PsbJ, PsbK, PsbL, PsbM, PsbT, PsbX, PsbY, PsbZ, Psb30/Ycf12, peripheral proteins PsbO, CyanoQ (PsbQ), PsbU, PsbV and a large number of cofactors. It forms dimeric complexes.

It localises to the cellular thylakoid membrane. In terms of biological role, one of the components of the core complex of photosystem II (PSII). PSII is a light-driven water:plastoquinone oxidoreductase that uses light energy to abstract electrons from H(2)O, generating O(2) and a proton gradient subsequently used for ATP formation. It consists of a core antenna complex that captures photons, and an electron transfer chain that converts photonic excitation into a charge separation. This subunit is found at the monomer-monomer interface. The protein is Photosystem II reaction center protein M of Synechococcus sp. (strain CC9311).